A 64-amino-acid chain; its full sequence is Large ribosomal subunit protein bL35 (64 aa).

Residues 1-10 (MPKMKTNSAA) are compositionally biased toward polar residues. The tract at residues 1-64 (MPKMKTNSAA…SKNMKKLLGR (64 aa)) is disordered.

It belongs to the bacterial ribosomal protein bL35 family.

The sequence is that of Large ribosomal subunit protein bL35 from Bifidobacterium adolescentis (strain ATCC 15703 / DSM 20083 / NCTC 11814 / E194a).